Reading from the N-terminus, the 277-residue chain is Urease accessory protein UreD (277 aa).

The protein belongs to the UreD family. UreD, UreF and UreG form a complex that acts as a GTP-hydrolysis-dependent molecular chaperone, activating the urease apoprotein by helping to assemble the nickel containing metallocenter of UreC. The UreE protein probably delivers the nickel.

The protein localises to the cytoplasm. In terms of biological role, required for maturation of urease via the functional incorporation of the urease nickel metallocenter. This is Urease accessory protein UreD from Pseudomonas putida (strain GB-1).